We begin with the raw amino-acid sequence, 598 residues long: Probable polysaccharide biosynthesis protein EpsC (598 aa).

Transmembrane regions (helical) follow at residues 1–21 (MIIALDTYLVLNSVIAGYQFL), 31–51 (GALLLTAVSLLLSYHVCAFLF), 63–83 (LGELIVLLKGITLSAAVTGVI), and 87–107 (VYHTMFFRLLTACWVLQLLSI).

It belongs to the polysaccharide synthase family.

The protein resides in the cell membrane. In terms of biological role, involved in biofilm formation. In Bacillus subtilis (strain 168), this protein is Probable polysaccharide biosynthesis protein EpsC (epsC).